The chain runs to 369 residues: Cytokine receptor common subunit gamma (369 aa).

An N-terminal signal peptide occupies residues 1–22; that stretch reads MLKLLLSPRSFLVLQLLLLRAG. Residues 23-263 lie on the Extracellular side of the membrane; the sequence is WSSKVLMSSA…ENPSLFALEA (241 aa). C62 and C72 form a disulfide bridge. N-linked (GlcNAc...) asparagine glycans are attached at residues N71, N75, N84, and N96. A disulfide bond links C102 and C115. The Fibronectin type-III domain occupies 156–254; the sequence is APENLTLSNL…VHWGSHTVEE (99 aa). N-linked (GlcNAc...) asparagine glycans are attached at residues N159 and N164. The short motif at 238–242 is the WSXWS motif element; it reads WSKWS. The chain crosses the membrane as a helical span at residues 264-284; that stretch reads VLIPVGTMGLIITLIFVYCWL. Over 285 to 369 the chain is Cytoplasmic; it reads ERMPPIPPIK…PPCYSLKPEA (85 aa). The Box 1 motif motif lies at 286 to 294; sequence RMPPIPPIK.

The protein belongs to the type I cytokine receptor family. Type 5 subfamily. In terms of assembly, the gamma subunit is common to the IL2, IL4, IL7, IL15, IL21 and probably also the IL13 receptors. Interacts with SHB upon interleukin stimulation. Interacts with IL9.

Its subcellular location is the cell membrane. It is found in the cell surface. In terms of biological role, common subunit for the receptors for a variety of interleukins. Probably in association with IL15RA, involved in the stimulation of neutrophil phagocytosis by IL15. The polypeptide is Cytokine receptor common subunit gamma (Il2rg) (Mus musculus (Mouse)).